We begin with the raw amino-acid sequence, 229 residues long: MTATAPVITVDGPSGAGKGTLCKALAESLGWRLLDSGAIYRVLALAALHHQVDITSEEALVPLAAHLDVRFIAQDGKLQVILEGEDVSNEIRTETVGNTASQAAAFPRVREALLRRQRAFREAPGLIADGRDMGTVVFPDAPVKIFLDASSEERAHRRMLQLQEKGFNVNFERLLAEIKERDDRDRNRPIAPLVPASDALVLDSTSMSIDEVIQRALTYAHEVLALPQQ.

An ATP-binding site is contributed by 12 to 20 (GPSGAGKGT).

This sequence belongs to the cytidylate kinase family. Type 1 subfamily.

It localises to the cytoplasm. The enzyme catalyses CMP + ATP = CDP + ADP. It carries out the reaction dCMP + ATP = dCDP + ADP. The sequence is that of Cytidylate kinase from Serratia proteamaculans (strain 568).